A 432-amino-acid polypeptide reads, in one-letter code: Glutamyl-tRNA reductase (432 aa).

Substrate-binding positions include 49 to 52, S101, 106 to 108, and Q112; these read TCNR and EPQ. The active-site Nucleophile is C50. 181–186 is a binding site for NADP(+); sequence GAGETI. A disordered region spans residues 407-432; sequence FPEKPGYQHPPIATPIVRTDDADPAP.

This sequence belongs to the glutamyl-tRNA reductase family. Homodimer.

The enzyme catalyses (S)-4-amino-5-oxopentanoate + tRNA(Glu) + NADP(+) = L-glutamyl-tRNA(Glu) + NADPH + H(+). It functions in the pathway porphyrin-containing compound metabolism; protoporphyrin-IX biosynthesis; 5-aminolevulinate from L-glutamyl-tRNA(Glu): step 1/2. Its function is as follows. Catalyzes the NADPH-dependent reduction of glutamyl-tRNA(Glu) to glutamate 1-semialdehyde (GSA). In Xanthomonas oryzae pv. oryzae (strain MAFF 311018), this protein is Glutamyl-tRNA reductase.